The following is a 250-amino-acid chain: Proteasome subunit alpha (250 aa).

Belongs to the peptidase T1A family. In terms of assembly, the 20S proteasome core is composed of 14 alpha and 14 beta subunits that assemble into four stacked heptameric rings, resulting in a barrel-shaped structure. The two inner rings, each composed of seven catalytic beta subunits, are sandwiched by two outer rings, each composed of seven alpha subunits. The catalytic chamber with the active sites is on the inside of the barrel. Has a gated structure, the ends of the cylinder being occluded by the N-termini of the alpha-subunits. Is capped at one or both ends by the proteasome regulatory ATPase, PAN.

Its subcellular location is the cytoplasm. Its activity is regulated as follows. The formation of the proteasomal ATPase PAN-20S proteasome complex, via the docking of the C-termini of PAN into the intersubunit pockets in the alpha-rings, triggers opening of the gate for substrate entry. Interconversion between the open-gate and close-gate conformations leads to a dynamic regulation of the 20S proteasome proteolysis activity. Functionally, component of the proteasome core, a large protease complex with broad specificity involved in protein degradation. This chain is Proteasome subunit alpha, found in Methanobrevibacter smithii (strain ATCC 35061 / DSM 861 / OCM 144 / PS).